Reading from the N-terminus, the 149-residue chain is Deoxyuridine 5'-triphosphate nucleotidohydrolase (149 aa).

Substrate is bound by residues 65–67 (RSG), Asn-78, 82–84 (TID), and Lys-92.

It belongs to the dUTPase family. The cofactor is Mg(2+).

The enzyme catalyses dUTP + H2O = dUMP + diphosphate + H(+). It functions in the pathway pyrimidine metabolism; dUMP biosynthesis; dUMP from dCTP (dUTP route): step 2/2. In terms of biological role, this enzyme is involved in nucleotide metabolism: it produces dUMP, the immediate precursor of thymidine nucleotides and it decreases the intracellular concentration of dUTP so that uracil cannot be incorporated into DNA. In Chlorobium chlorochromatii (strain CaD3), this protein is Deoxyuridine 5'-triphosphate nucleotidohydrolase.